The following is a 330-amino-acid chain: Glycerol-3-phosphate dehydrogenase [NAD(P)+] (330 aa).

NADPH-binding residues include Ser-10, Trp-11, Arg-31, and Lys-105. Lys-105, Gly-135, and Ser-137 together coordinate sn-glycerol 3-phosphate. Ala-139 is an NADPH binding site. Sn-glycerol 3-phosphate-binding residues include Lys-190, Asp-243, Ser-253, Arg-254, and Asn-255. The active-site Proton acceptor is the Lys-190. An NADPH-binding site is contributed by Arg-254. NADPH is bound by residues Val-278 and Glu-280.

This sequence belongs to the NAD-dependent glycerol-3-phosphate dehydrogenase family.

It localises to the cytoplasm. It catalyses the reaction sn-glycerol 3-phosphate + NAD(+) = dihydroxyacetone phosphate + NADH + H(+). The catalysed reaction is sn-glycerol 3-phosphate + NADP(+) = dihydroxyacetone phosphate + NADPH + H(+). It participates in membrane lipid metabolism; glycerophospholipid metabolism. Functionally, catalyzes the reduction of the glycolytic intermediate dihydroxyacetone phosphate (DHAP) to sn-glycerol 3-phosphate (G3P), the key precursor for phospholipid synthesis. The polypeptide is Glycerol-3-phosphate dehydrogenase [NAD(P)+] (Oleidesulfovibrio alaskensis (strain ATCC BAA-1058 / DSM 17464 / G20) (Desulfovibrio alaskensis)).